The chain runs to 360 residues: Peptide chain release factor 1 (360 aa).

Gln-235 bears the N5-methylglutamine mark.

The protein belongs to the prokaryotic/mitochondrial release factor family. Post-translationally, methylated by PrmC. Methylation increases the termination efficiency of RF1.

The protein localises to the cytoplasm. Functionally, peptide chain release factor 1 directs the termination of translation in response to the peptide chain termination codons UAG and UAA. The chain is Peptide chain release factor 1 from Janthinobacterium sp. (strain Marseille) (Minibacterium massiliensis).